The primary structure comprises 182 residues: Flavodoxin (182 aa).

Positions 4–173 (IGLFFGSDTG…RLKGWLSLIA (170 aa)) constitute a Flavodoxin-like domain.

Belongs to the flavodoxin family. Requires FMN as cofactor.

Low-potential electron donor to a number of redox enzymes. NifF is the electron donor to nitrogenase. The polypeptide is Flavodoxin (nifF) (Rhodobacter capsulatus (strain ATCC BAA-309 / NBRC 16581 / SB1003)).